The primary structure comprises 548 residues: uncharacterized protein (548 aa).

Positions 8 to 200 constitute a DhaL domain; sequence KLFADMIIQG…LLCVYEGFLK (193 aa).

This is an uncharacterized protein from Staphylococcus aureus (strain NCTC 8325 / PS 47).